The primary structure comprises 329 residues: Short-chain dehydrogenase/reductase prx4 (329 aa).

Residues Ser-58, Ile-60, and Asn-81 each contribute to the NADP(+) site. Asn-91 carries an N-linked (GlcNAc...) asparagine glycan. Positions 98, 121, 161, 194, 198, and 229 each coordinate NADP(+). The Proton acceptor role is filled by Tyr-194. Lys-198 acts as the Lowers pKa of active site Tyr in catalysis. Residues 238–258 (GPLMAAGLPVSSAHMVGLAVV) traverse the membrane as a helical segment.

This sequence belongs to the short-chain dehydrogenases/reductases (SDR) family.

It localises to the membrane. Its pathway is sesquiterpene biosynthesis. In terms of biological role, short-chain dehydrogenase/reductase; part of the gene cluster that mediates the biosynthesis of PR-toxin, a bicyclic sesquiterpene belonging to the eremophilane class and acting as a mycotoxin. The first step of the pathway is catalyzed by the aristolochene synthase which performs the cyclization of trans,trans-farnesyl diphosphate (FPP) to the bicyclic sesquiterpene aristolochene. Following the formation of aristolochene, the non-oxygenated aristolochene is converted to the trioxygenated intermediate eremofortin B, via 7-epi-neopetasone. This conversion appears to involve three enzymes, a hydroxysterol oxidase-like enzyme, the quinone-oxidase prx3 that forms the quinone-type-structure in the bicyclic nucleus of aristolochene with the C8-oxo group and the C-3 hydroxyl group, and the P450 monooxygenase ORF6 that introduces the epoxide at the double bond between carbons 1 and 2. No monoxy or dioxy-intermediates have been reported to be released to the broth, so these three early oxidative reactions may be coupled together. Eremofortin B is further oxidized by another P450 monooxygenase, that introduces a second epoxide between carbons 7 and 11 prior to acetylation to eremofortin A by the acetyltransferase ORF8. The second epoxidation may be performed by a second P450 monooxygenase. After the acetylation step, eremofortin A is converted to eremofortin C and then to PR-toxin. First the conversion of eremofortin A to eremofortin C proceeds by oxidation of the side chain of the molecule at C-12 and is catalyzed by the short-chain oxidoreductase prx1. The cytochrome P450 monooxygenase ORF6 is probably also involved in this step. The primary alcohol formed at C-12 is finally oxidized by the short-chain alcohol dehydrogenase prx4 that forms PR-toxin. This Penicillium roqueforti protein is Short-chain dehydrogenase/reductase prx4.